Here is a 414-residue protein sequence, read N- to C-terminus: Gamma-glutamyl phosphate reductase (414 aa).

This sequence belongs to the gamma-glutamyl phosphate reductase family.

The protein localises to the cytoplasm. It carries out the reaction L-glutamate 5-semialdehyde + phosphate + NADP(+) = L-glutamyl 5-phosphate + NADPH + H(+). The protein operates within amino-acid biosynthesis; L-proline biosynthesis; L-glutamate 5-semialdehyde from L-glutamate: step 2/2. In terms of biological role, catalyzes the NADPH-dependent reduction of L-glutamate 5-phosphate into L-glutamate 5-semialdehyde and phosphate. The product spontaneously undergoes cyclization to form 1-pyrroline-5-carboxylate. The polypeptide is Gamma-glutamyl phosphate reductase (Kosmotoga olearia (strain ATCC BAA-1733 / DSM 21960 / TBF 19.5.1)).